The chain runs to 189 residues: MSEIKMPEFLTVESALKDSGLAVTPSELHGLLVGMISGGLSLDDQTWKPLIYDYTNDGMGWPDSAIKVGSAVFQCTVAELTAEKLALELLIPSEKESLMNRADGLSEWVNHFISGLGLVELKLDKTSDALKEALADLEEIARLGIDEEDDLEEQESLFEQIVEHVRICVLTIHAELGQQIHTDASKTVH.

It belongs to the UPF0149 family.

The polypeptide is UPF0149 protein VF_2102 (Aliivibrio fischeri (strain ATCC 700601 / ES114) (Vibrio fischeri)).